The following is a 238-amino-acid chain: tRNA (guanine-N(7)-)-methyltransferase (238 aa).

S-adenosyl-L-methionine contacts are provided by glutamate 68, glutamate 93, aspartate 120, and aspartate 143. Aspartate 143 is a catalytic residue. Residues lysine 147, aspartate 179, and 216 to 219 (TKFE) each bind substrate.

It belongs to the class I-like SAM-binding methyltransferase superfamily. TrmB family.

It carries out the reaction guanosine(46) in tRNA + S-adenosyl-L-methionine = N(7)-methylguanosine(46) in tRNA + S-adenosyl-L-homocysteine. It participates in tRNA modification; N(7)-methylguanine-tRNA biosynthesis. Functionally, catalyzes the formation of N(7)-methylguanine at position 46 (m7G46) in tRNA. The polypeptide is tRNA (guanine-N(7)-)-methyltransferase (Marinobacter nauticus (strain ATCC 700491 / DSM 11845 / VT8) (Marinobacter aquaeolei)).